A 128-amino-acid polypeptide reads, in one-letter code: Cytochrome c oxidase subunit 5B, mitochondrial (128 aa).

A mitochondrion-targeting transit peptide spans 1-30 (MKRGSAALEVRELKMQTPTASCVLSTQRAN). N6-acetyllysine occurs at positions 67 and 85. Zn(2+) contacts are provided by cysteine 90, cysteine 92, cysteine 112, and cysteine 115. Position 120 is an N6-acetyllysine (lysine 120).

This sequence belongs to the cytochrome c oxidase 5b family. Expressed in testis. Not expressed in brain, heart, liver, kidney, spleen, lung, duodenum, muscle, epididymis, vagina, uterus and ovary.

The protein localises to the mitochondrion inner membrane. Functionally, this protein is one of the nuclear-coded polypeptide chains of cytochrome c oxidase, the terminal oxidase in mitochondrial electron transport. The polypeptide is Cytochrome c oxidase subunit 5B, mitochondrial (Vulpes vulpes (Red fox)).